A 140-amino-acid polypeptide reads, in one-letter code: Nucleoside diphosphate kinase (140 aa).

6 residues coordinate ATP: K11, F59, R87, T93, R104, and N114. H117 acts as the Pros-phosphohistidine intermediate in catalysis.

The protein belongs to the NDK family. In terms of assembly, homotetramer. It depends on Mg(2+) as a cofactor.

The protein localises to the cytoplasm. It carries out the reaction a 2'-deoxyribonucleoside 5'-diphosphate + ATP = a 2'-deoxyribonucleoside 5'-triphosphate + ADP. It catalyses the reaction a ribonucleoside 5'-diphosphate + ATP = a ribonucleoside 5'-triphosphate + ADP. Its function is as follows. Major role in the synthesis of nucleoside triphosphates other than ATP. The ATP gamma phosphate is transferred to the NDP beta phosphate via a ping-pong mechanism, using a phosphorylated active-site intermediate. This chain is Nucleoside diphosphate kinase, found in Brucella anthropi (strain ATCC 49188 / DSM 6882 / CCUG 24695 / JCM 21032 / LMG 3331 / NBRC 15819 / NCTC 12168 / Alc 37) (Ochrobactrum anthropi).